We begin with the raw amino-acid sequence, 627 residues long: Spindle assembly abnormal protein 6 homolog (627 aa).

A PISA domain is found at 39-91 (VHRKDLVVRLTDDTDLYFLYNLIISEEDFQSLKVQQGLLIDFTSFPQKFIDLL). Residues 153 to 473 (LASCLSSVKE…SREVLKTNEN (321 aa)) adopt a coiled-coil conformation. Disordered regions lie at residues 187-257 (QTLS…LQTK) and 561-586 (EVSP…SKYF). Residues 191 to 201 (EKSRELDKLRS) show a composition bias toward basic and acidic residues. Positions 202–213 (EWTSQTTSLSSR) are enriched in polar residues. A compositionally biased stretch (basic and acidic residues) spans 214–226 (HMQDLTAEREKAL). The segment covering 229-238 (QSRLQQQNEQ) has biased composition (low complexity).

In terms of assembly, nine homodimers form a cartwheel structure with an internal diameter of 23 nM and radial spokes connecting to the microtubule triplets.

It is found in the cytoplasm. The protein localises to the cytoskeleton. The protein resides in the microtubule organizing center. It localises to the centrosome. Its function is as follows. Central scaffolding component of the centrioles ensuring their 9-fold symmetry. Required for centrosome biogenesis and duplication: required both for mother-centriole-dependent centriole duplication and deuterosome-dependent centriole amplification in multiciliated cells. The polypeptide is Spindle assembly abnormal protein 6 homolog (sass6) (Danio rerio (Zebrafish)).